Reading from the N-terminus, the 1143-residue chain is DNA-directed RNA polymerase subunit beta (1143 aa).

This sequence belongs to the RNA polymerase beta chain family. In terms of assembly, in plastids the minimal PEP RNA polymerase catalytic core is composed of four subunits: alpha, beta, beta', and beta''. When a (nuclear-encoded) sigma factor is associated with the core the holoenzyme is formed, which can initiate transcription.

It localises to the plastid. It is found in the chloroplast. The enzyme catalyses RNA(n) + a ribonucleoside 5'-triphosphate = RNA(n+1) + diphosphate. Functionally, DNA-dependent RNA polymerase catalyzes the transcription of DNA into RNA using the four ribonucleoside triphosphates as substrates. This chain is DNA-directed RNA polymerase subunit beta, found in Pyropia yezoensis (Susabi-nori).